The primary structure comprises 202 residues: uncharacterized protein (202 aa).

A helical membrane pass occupies residues 18-38; sequence FLIFLIFLSVLGCGITISGCI.

It is found in the membrane. This is an uncharacterized protein from Methanocaldococcus jannaschii (strain ATCC 43067 / DSM 2661 / JAL-1 / JCM 10045 / NBRC 100440) (Methanococcus jannaschii).